A 265-amino-acid polypeptide reads, in one-letter code: Isoprenyl transferase 1 (265 aa).

Aspartate 43 is an active-site residue. Aspartate 43 is a Mg(2+) binding site. Substrate is bound by residues 44-47 (GNRR), tryptophan 48, histidine 61, and 89-91 (STE). The active-site Proton acceptor is the asparagine 92. Substrate contacts are provided by residues arginine 95, arginine 214, and 220-222 (RLS). Mg(2+) is bound at residue glutamate 233.

Belongs to the UPP synthase family. Homodimer. It depends on Mg(2+) as a cofactor.

In terms of biological role, catalyzes the condensation of isopentenyl diphosphate (IPP) with allylic pyrophosphates generating different type of terpenoids. This Corynebacterium diphtheriae (strain ATCC 700971 / NCTC 13129 / Biotype gravis) protein is Isoprenyl transferase 1.